Consider the following 140-residue polypeptide: Large ribosomal subunit protein uL16c (140 aa).

It belongs to the universal ribosomal protein uL16 family. Part of the 50S ribosomal subunit.

Its subcellular location is the plastid. It is found in the chloroplast. This Psilotum nudum (Whisk fern) protein is Large ribosomal subunit protein uL16c.